The primary structure comprises 66 residues: Small ribosomal subunit protein eS27 (66 aa).

Residues Cys21, Cys24, Cys40, and Cys43 each coordinate Zn(2+). The C4-type zinc-finger motif lies at 21 to 43; sequence CPNCGNEQTVFSHATFPVRCLSC.

The protein belongs to the eukaryotic ribosomal protein eS27 family. Part of the 30S ribosomal subunit. It depends on Zn(2+) as a cofactor.

In Sulfurisphaera tokodaii (strain DSM 16993 / JCM 10545 / NBRC 100140 / 7) (Sulfolobus tokodaii), this protein is Small ribosomal subunit protein eS27.